The sequence spans 110 residues: Iron-sulfur cluster assembly protein CyaY (110 aa).

This sequence belongs to the frataxin family.

Functionally, involved in iron-sulfur (Fe-S) cluster assembly. May act as a regulator of Fe-S biogenesis. This is Iron-sulfur cluster assembly protein CyaY from Pseudomonas fluorescens (strain ATCC BAA-477 / NRRL B-23932 / Pf-5).